The sequence spans 93 residues: UPF0298 protein GWCH70_0997 (93 aa).

Belongs to the UPF0298 family.

It localises to the cytoplasm. This is UPF0298 protein GWCH70_0997 from Geobacillus sp. (strain WCH70).